A 240-amino-acid chain; its full sequence is L-isoleucine-4-hydroxylase (240 aa).

The Fe cation site is built by His-159, Asp-161, and His-212.

It belongs to the iron/ascorbate-dependent oxidoreductase family. It depends on L-ascorbate as a cofactor. Fe(2+) is required as a cofactor.

The catalysed reaction is L-isoleucine + 2-oxoglutarate + O2 = (4S)-4-hydroxy-L-isoleucine + succinate + CO2. In terms of biological role, catalyzes the hydroxylation of L-isoleucine to produce (4S)-4-hydroxy-L-isoleucine. Can also catalyze the hydroxylation of L-leucine, L-norvaline, L-norleucine and L-allo-isoleucine, as well as the sulfoxidation of L-methionine, L-ethionine, S-methyl-L-cysteine, S-ethyl-L-cysteine, and S-allyl-L-cysteine. In Bacillus thuringiensis, this protein is L-isoleucine-4-hydroxylase.